Here is a 266-residue protein sequence, read N- to C-terminus: Beta-lactamase OXA-19 (266 aa).

An N-terminal signal peptide occupies residues 1–20 (MKTFAAYVITACLSSTALAS). Ser-67 serves as the catalytic Acyl-ester intermediate. Residue Lys-70 is modified to N6-carboxylysine. 205 to 207 (KTG) provides a ligand contact to substrate.

This sequence belongs to the class-D beta-lactamase family.

The catalysed reaction is a beta-lactam + H2O = a substituted beta-amino acid. The protein is Beta-lactamase OXA-19 (bla) of Pseudomonas aeruginosa.